A 241-amino-acid polypeptide reads, in one-letter code: Cell division cycle-associated protein 4 (241 aa).

An SERTA domain is found at 30-77; it reads YSLQRQSLLDMSLVKLQLCHMLVEPNLCRSVLIANTVRQIQEEMTQDG.

As to expression, highest levels of expression in the pancreas, thymus, testis, spleen, liver, placenta and leukocytes. Relatively low levels in the lung, kidney, prostate, ovary, small intestine and colon. Hardly detectable, if at all, in the brain, skeletal muscle and heart.

The protein resides in the nucleus. In terms of biological role, may participate in the regulation of cell proliferation through the E2F/RB pathway. May be involved in molecular regulation of hematopoietic stem cells and progenitor cell lineage commitment and differentiation. This chain is Cell division cycle-associated protein 4 (CDCA4), found in Homo sapiens (Human).